The sequence spans 188 residues: UPF0301 protein XAC2918 (188 aa).

It belongs to the UPF0301 (AlgH) family.

The protein is UPF0301 protein XAC2918 of Xanthomonas axonopodis pv. citri (strain 306).